Consider the following 446-residue polypeptide: Tubulin beta chain (446 aa).

GTP-binding residues include Gln-11, Glu-69, Ser-138, Gly-142, Thr-143, Gly-144, Asn-204, and Asn-226. Mg(2+) is bound at residue Glu-69. Residues 422-446 form a disordered region; that stretch reads YQQYQDAGIDEEEEEYEEELPEGEE. Positions 429-446 are enriched in acidic residues; that stretch reads GIDEEEEEYEEELPEGEE.

It belongs to the tubulin family. Dimer of alpha and beta chains. A typical microtubule is a hollow water-filled tube with an outer diameter of 25 nm and an inner diameter of 15 nM. Alpha-beta heterodimers associate head-to-tail to form protofilaments running lengthwise along the microtubule wall with the beta-tubulin subunit facing the microtubule plus end conferring a structural polarity. Microtubules usually have 13 protofilaments but different protofilament numbers can be found in some organisms and specialized cells. Requires Mg(2+) as cofactor.

It is found in the cytoplasm. The protein localises to the cytoskeleton. In terms of biological role, tubulin is the major constituent of microtubules, a cylinder consisting of laterally associated linear protofilaments composed of alpha- and beta-tubulin heterodimers. Microtubules grow by the addition of GTP-tubulin dimers to the microtubule end, where a stabilizing cap forms. Below the cap, tubulin dimers are in GDP-bound state, owing to GTPase activity of alpha-tubulin. The polypeptide is Tubulin beta chain (TUB2) (Gibberella zeae (strain ATCC MYA-4620 / CBS 123657 / FGSC 9075 / NRRL 31084 / PH-1) (Wheat head blight fungus)).